A 372-amino-acid chain; its full sequence is tRNA-specific 2-thiouridylase MnmA (372 aa).

ATP is bound by residues 16–23 (GMSGGVDS) and Met-42. Residues 102–104 (NPD) are interaction with target base in tRNA. Cys-107 serves as the catalytic Nucleophile. Cys-107 and Cys-205 are oxidised to a cystine. ATP is bound at residue Gly-132. Positions 155–157 (KDQ) are interaction with tRNA. The Cysteine persulfide intermediate role is filled by Cys-205. An interaction with tRNA region spans residues 317-318 (RY).

It belongs to the MnmA/TRMU family.

Its subcellular location is the cytoplasm. It carries out the reaction S-sulfanyl-L-cysteinyl-[protein] + uridine(34) in tRNA + AH2 + ATP = 2-thiouridine(34) in tRNA + L-cysteinyl-[protein] + A + AMP + diphosphate + H(+). In terms of biological role, catalyzes the 2-thiolation of uridine at the wobble position (U34) of tRNA, leading to the formation of s(2)U34. This chain is tRNA-specific 2-thiouridylase MnmA, found in Shewanella baltica (strain OS195).